Here is a 483-residue protein sequence, read N- to C-terminus: MORN repeat-containing protein 1 (483 aa).

Ser-18 is subject to Phosphoserine. MORN repeat units follow at residues Tyr-39–Tyr-61, Tyr-62–Asn-84, Tyr-86–His-108, Tyr-109–Val-131, Tyr-132–Lys-154, Tyr-155–Thr-177, and Tyr-178–Thr-200. The segment at Glu-392–Glu-427 is disordered. Residues Ala-394–Pro-404 show a composition bias toward basic and acidic residues. Ser-403 carries the post-translational modification Phosphoserine. A compositionally biased stretch (polar residues) spans Thr-418–Glu-427.

This Rattus norvegicus (Rat) protein is MORN repeat-containing protein 1 (Morn1).